The primary structure comprises 291 residues: ATP synthase gamma chain (291 aa).

Belongs to the ATPase gamma chain family. In terms of assembly, F-type ATPases have 2 components, CF(1) - the catalytic core - and CF(0) - the membrane proton channel. CF(1) has five subunits: alpha(3), beta(3), gamma(1), delta(1), epsilon(1). CF(0) has three main subunits: a, b and c.

The protein resides in the cell inner membrane. Functionally, produces ATP from ADP in the presence of a proton gradient across the membrane. The gamma chain is believed to be important in regulating ATPase activity and the flow of protons through the CF(0) complex. In Syntrophus aciditrophicus (strain SB), this protein is ATP synthase gamma chain.